A 457-amino-acid polypeptide reads, in one-letter code: Argininosuccinate lyase (457 aa).

This sequence belongs to the lyase 1 family. Argininosuccinate lyase subfamily.

It localises to the cytoplasm. The catalysed reaction is 2-(N(omega)-L-arginino)succinate = fumarate + L-arginine. Its pathway is amino-acid biosynthesis; L-arginine biosynthesis; L-arginine from L-ornithine and carbamoyl phosphate: step 3/3. The protein is Argininosuccinate lyase of Serratia proteamaculans (strain 568).